Reading from the N-terminus, the 481-residue chain is 3-isopropylmalate dehydratase large subunit (481 aa).

[4Fe-4S] cluster is bound by residues C357, C417, and C420. Residues 429–441 (SPGQRCASTSNRN) show a composition bias toward polar residues. Residues 429–451 (SPGQRCASTSNRNFEGRQGKGGR) form a disordered region.

The protein belongs to the aconitase/IPM isomerase family. LeuC type 1 subfamily. As to quaternary structure, heterodimer of LeuC and LeuD. Requires [4Fe-4S] cluster as cofactor.

The catalysed reaction is (2R,3S)-3-isopropylmalate = (2S)-2-isopropylmalate. The protein operates within amino-acid biosynthesis; L-leucine biosynthesis; L-leucine from 3-methyl-2-oxobutanoate: step 2/4. Its function is as follows. Catalyzes the isomerization between 2-isopropylmalate and 3-isopropylmalate, via the formation of 2-isopropylmaleate. This chain is 3-isopropylmalate dehydratase large subunit, found in Mycobacterium sp. (strain JLS).